We begin with the raw amino-acid sequence, 364 residues long: Nucleoporin SEH1 (364 aa).

WD repeat units lie at residues 10–49 (DHKD…EWHC), 55–96 (THSG…SNDK), 111–152 (DSRT…NLSQ), 160–210 (SCKL…RKYA), 217–258 (TVTD…RESA), and 276–315 (SHNS…NWKC).

This sequence belongs to the WD repeat SEC13 family. As to quaternary structure, component of the Nup107-160 subcomplex of the nuclear pore complex (NPC). The Nup107-160 subcomplex includes NUP160, NUP133, NUP107, NUP98, NUP85, NUP43, NUP37, SEH1 and SEC13. Component of the GATOR2 subcomplex, composed of MIOS, SEC13, SEH1L, WDR24 and WDR59. The GATOR2 complex interacts with CASTOR1 and CASTOR2; the interaction is negatively regulated by arginine. The GATOR2 complex interacts with SESN1, SESN2 and SESN3; the interaction is negatively regulated by amino acids.

The protein localises to the chromosome. The protein resides in the centromere. It is found in the kinetochore. It localises to the nucleus. Its subcellular location is the nuclear pore complex. The protein localises to the lysosome membrane. With respect to regulation, the GATOR2 complex is negatively regulated by the upstream amino acid sensors CASTOR1 and SESN2, which sequester the GATOR2 complex in absence of amino acids. In the presence of abundant amino acids, GATOR2 is released from CASTOR1 and SESN2 and activated. Functionally, component of the Nup107-160 subcomplex of the nuclear pore complex (NPC). The Nup107-160 subcomplex is required for the assembly of a functional NPC. The Nup107-160 subcomplex is also required for normal kinetochore microtubule attachment, mitotic progression and chromosome segregation. This subunit plays a role in recruitment of the Nup107-160 subcomplex to the kinetochore. Its function is as follows. As a component of the GATOR2 complex, functions as an activator of the amino acid-sensing branch of the mTORC1 signaling pathway. The GATOR2 complex indirectly activates mTORC1 through the inhibition of the GATOR1 subcomplex. GATOR2 probably acts as an E3 ubiquitin-protein ligase toward GATOR1. In the presence of abundant amino acids, the GATOR2 complex mediates ubiquitination of the NPRL2 core component of the GATOR1 complex, leading to GATOR1 inactivation. In the absence of amino acids, GATOR2 is inhibited, activating the GATOR1 complex. The sequence is that of Nucleoporin SEH1 (seh1l) from Danio rerio (Zebrafish).